Consider the following 411-residue polypeptide: uncharacterized protein (411 aa).

This is an uncharacterized protein from Mycoplasma genitalium (strain ATCC 33530 / DSM 19775 / NCTC 10195 / G37) (Mycoplasmoides genitalium).